A 340-amino-acid chain; its full sequence is Holliday junction branch migration complex subunit RuvB (340 aa).

Positions 1-181 are large ATPase domain (RuvB-L); sequence MDRIVEIEKA…FGMQFRLNFY (181 aa). Residues leucine 20, arginine 21, glycine 62, lysine 65, threonine 66, threonine 67, 128–130, arginine 171, tyrosine 181, and arginine 218 each bind ATP; that span reads EDF. Position 66 (threonine 66) interacts with Mg(2+). The interval 182–252 is small ATPAse domain (RuvB-S); the sequence is TSDELAKIVQ…RAKSSLDALG (71 aa). The tract at residues 255–340 is head domain (RuvB-H); the sequence is DLGFDEMDLK…TQKGLFDEDQ (86 aa). Positions 309 and 314 each coordinate DNA.

It belongs to the RuvB family. In terms of assembly, homohexamer. Forms an RuvA(8)-RuvB(12)-Holliday junction (HJ) complex. HJ DNA is sandwiched between 2 RuvA tetramers; dsDNA enters through RuvA and exits via RuvB. An RuvB hexamer assembles on each DNA strand where it exits the tetramer. Each RuvB hexamer is contacted by two RuvA subunits (via domain III) on 2 adjacent RuvB subunits; this complex drives branch migration. In the full resolvosome a probable DNA-RuvA(4)-RuvB(12)-RuvC(2) complex forms which resolves the HJ.

It is found in the cytoplasm. It carries out the reaction ATP + H2O = ADP + phosphate + H(+). The RuvA-RuvB-RuvC complex processes Holliday junction (HJ) DNA during genetic recombination and DNA repair, while the RuvA-RuvB complex plays an important role in the rescue of blocked DNA replication forks via replication fork reversal (RFR). RuvA specifically binds to HJ cruciform DNA, conferring on it an open structure. The RuvB hexamer acts as an ATP-dependent pump, pulling dsDNA into and through the RuvAB complex. RuvB forms 2 homohexamers on either side of HJ DNA bound by 1 or 2 RuvA tetramers; 4 subunits per hexamer contact DNA at a time. Coordinated motions by a converter formed by DNA-disengaged RuvB subunits stimulates ATP hydrolysis and nucleotide exchange. Immobilization of the converter enables RuvB to convert the ATP-contained energy into a lever motion, pulling 2 nucleotides of DNA out of the RuvA tetramer per ATP hydrolyzed, thus driving DNA branch migration. The RuvB motors rotate together with the DNA substrate, which together with the progressing nucleotide cycle form the mechanistic basis for DNA recombination by continuous HJ branch migration. Branch migration allows RuvC to scan DNA until it finds its consensus sequence, where it cleaves and resolves cruciform DNA. The polypeptide is Holliday junction branch migration complex subunit RuvB (Campylobacter hominis (strain ATCC BAA-381 / DSM 21671 / CCUG 45161 / LMG 19568 / NCTC 13146 / CH001A)).